The sequence spans 287 residues: Centromere protein P (287 aa).

A coiled-coil region spans residues 1-37; the sequence is MDNSVYQVYEDEIQLLEEEIKLLSDKYEDIQQESTFF.

Belongs to the CENP-P/CTF19 family. As to quaternary structure, component of the CENPA-HI complex, at least composed of CENPH, CENPI, CENPK, CENPL, CENPM, CENPO and CENPP.

The protein localises to the nucleus. The protein resides in the chromosome. It localises to the centromere. Component of the CENPA-HI complex, a centromeric complex involved in assembly of kinetochore proteins, mitotic progression and chromosome segregation. The chain is Centromere protein P (CENPP) from Gallus gallus (Chicken).